We begin with the raw amino-acid sequence, 445 residues long: Succinate--CoA ligase [ADP-forming] subunit beta, mitochondrial (445 aa).

The transit peptide at 1–17 (MLSNIVKKTIQSSKNLK) directs the protein to the mitochondrion. The ATP-grasp domain maps to 43-270 (QKMMKSYGIN…DNAAFRHPDI (228 aa)). Residues Lys-80 and 87 to 89 (GRG) contribute to the ATP site. Positions 240 and 254 each coordinate Mg(2+). Substrate is bound by residues Asn-305 and 362-364 (GIM).

The protein belongs to the succinate/malate CoA ligase beta subunit family. ATP-specific subunit beta subfamily. Heterodimer of an alpha and a beta subunit. The beta subunit determines specificity for ATP. The cofactor is Mg(2+).

It localises to the mitochondrion. It carries out the reaction succinate + ATP + CoA = succinyl-CoA + ADP + phosphate. It participates in carbohydrate metabolism; tricarboxylic acid cycle; succinate from succinyl-CoA (ligase route): step 1/1. Its function is as follows. ATP-specific succinyl-CoA synthetase functions in the citric acid cycle (TCA), coupling the hydrolysis of succinyl-CoA to the synthesis of ATP and thus represents the only step of substrate-level phosphorylation in the TCA. The beta subunit provides nucleotide specificity of the enzyme and binds the substrate succinate, while the binding sites for coenzyme A and phosphate are found in the alpha subunit. The chain is Succinate--CoA ligase [ADP-forming] subunit beta, mitochondrial (scsC) from Dictyostelium discoideum (Social amoeba).